The following is a 795-amino-acid chain: Phenylalanine--tRNA ligase beta subunit (795 aa).

Residues 39 to 148 (AGRFTGVVVG…AEAPIGQDIR (110 aa)) form the tRNA-binding domain. Residues 401-476 (PQPATITLRR…RVYGYDAIPN (76 aa)) enclose the B5 domain. Positions 454, 460, 463, and 464 each coordinate Mg(2+). The 94-residue stretch at 701 to 794 (SRFPANRRDI…LKQRFQASLR (94 aa)) folds into the FDX-ACB domain.

Belongs to the phenylalanyl-tRNA synthetase beta subunit family. Type 1 subfamily. Tetramer of two alpha and two beta subunits. Mg(2+) is required as a cofactor.

Its subcellular location is the cytoplasm. The enzyme catalyses tRNA(Phe) + L-phenylalanine + ATP = L-phenylalanyl-tRNA(Phe) + AMP + diphosphate + H(+). The polypeptide is Phenylalanine--tRNA ligase beta subunit (Sodalis glossinidius (strain morsitans)).